The chain runs to 477 residues: Glycogen synthase (477 aa).

Lysine 15 is a binding site for ADP-alpha-D-glucose.

The protein belongs to the glycosyltransferase 1 family. Bacterial/plant glycogen synthase subfamily.

The enzyme catalyses [(1-&gt;4)-alpha-D-glucosyl](n) + ADP-alpha-D-glucose = [(1-&gt;4)-alpha-D-glucosyl](n+1) + ADP + H(+). It functions in the pathway glycan biosynthesis; glycogen biosynthesis. Its function is as follows. Synthesizes alpha-1,4-glucan chains using ADP-glucose. This Salmonella arizonae (strain ATCC BAA-731 / CDC346-86 / RSK2980) protein is Glycogen synthase.